The sequence spans 732 residues: Ferric aerobactin receptor (732 aa).

An N-terminal signal peptide occupies residues 1–25 (MMISKKYTLWALNPLLLTMMAPAVA). Positions 31-38 (ETFVVSAN) match the TonB box motif. The TBDR plug domain occupies 43–153 (TVAEMAQTTW…TGGLINIVTK (111 aa)). The TBDR beta-barrel domain occupies 158-732 (ETMMEFEAGT…TFGLNYSVLF (575 aa)). The TonB C-terminal box signature appears at 715–732 (YDYKGRGRTFGLNYSVLF).

It belongs to the TonB-dependent receptor family.

It is found in the cell outer membrane. Functionally, receptor for cloacin DF13/aerobactin. This Escherichia coli protein is Ferric aerobactin receptor (iutA).